A 192-amino-acid chain; its full sequence is Leucine-rich repeat-containing protein 51 (192 aa).

LRR repeat units follow at residues 50–71, 80–101, and 103–124; these read MTQS…NHAV, NLAW…LTTF, and NLSV…NKLA. The region spanning 137-175 is the LRRCT domain; sequence NPIEEEKGYRQYVLCTLPHITTFDFSGVTKADRTTAEVW.

It is found in the cytoplasm. The sequence is that of Leucine-rich repeat-containing protein 51 from Bos taurus (Bovine).